A 1167-amino-acid chain; its full sequence is Nucleolar protein 8 (1167 aa).

Residues 8–89 form the RRM domain; the sequence is KRLYVGGLSQ…GTLQIQLAKE (82 aa). Residues 223–304 form a disordered region; that stretch reads VQKDESSTGS…NSISDDDTDS (82 aa). Residue Lys-225 forms a Glycyl lysine isopeptide (Lys-Gly) (interchain with G-Cter in SUMO2) linkage. Residues 248 to 275 show a composition bias toward polar residues; the sequence is LTQQQAAQKRTCDSITPSKSSPVPVSDT. 2 positions are modified to phosphoserine: Ser-268 and Ser-298. Thr-302 is subject to Phosphothreonine. A Phosphoserine modification is found at Ser-304. Residue Lys-314 forms a Glycyl lysine isopeptide (Lys-Gly) (interchain with G-Cter in SUMO2) linkage. 2 positions are modified to phosphoserine: Ser-331 and Ser-365. Tyr-376 carries the phosphotyrosine modification. Phosphoserine is present on Ser-378. Position 381 is a phosphothreonine (Thr-381). Ser-432 is modified (phosphoserine). Disordered stretches follow at residues 435-470, 499-533, 590-908, 932-982, and 1006-1026; these read ESALSHGLKSLNRKSPSHSSSSEDADSASELADSEG, LKVPNEDTKSDGPETTTQCKFDRGSKSPKTPTGLR, KDSV…EEEL, NRGS…AEKL, and YTSEKEEGTPWNEDCGKEKPE. The segment covering 457-470 has biased composition (acidic residues); it reads EDADSASELADSEG. Residues 501–510 show a composition bias toward basic and acidic residues; it reads VPNEDTKSDG. The span at 640–652 shows a compositional bias: polar residues; it reads NYIQPQKRQTTFE. The segment covering 653-668 has biased composition (basic and acidic residues); the sequence is SQDRKAVSPSSSEKRS. Ser-723 carries the phosphoserine modification. The segment covering 727–736 has biased composition (basic and acidic residues); sequence SSKDTREIKT. The segment covering 738–748 has biased composition (polar residues); sequence FSLSISNSSDV. A compositionally biased stretch (basic and acidic residues) spans 749-776; sequence SAKDKHAEDNEKRLAALEARQKAKEVQK. Positions 753–779 form a coiled coil; it reads KHAEDNEKRLAALEARQKAKEVQKKLV. At Thr-795 the chain carries Phosphothreonine. At Ser-801 the chain carries Phosphoserine. Positions 817–827 are enriched in basic and acidic residues; it reads HPGEEWVKESM. A phosphoserine mark is found at Ser-837, Ser-838, Ser-843, and Ser-845. Residues 837–847 are compositionally biased toward acidic residues; the sequence is SSDDDESDSED. A compositionally biased stretch (basic and acidic residues) spans 874 to 887; the sequence is GTDDRFRMDSRFLE. Positions 886-924 form a coiled coil; that stretch reads LETDSEEEQEEVNEKKTAEEEELAEEKKKALNVVQSVLQ. Thr-888 carries the phosphothreonine modification. At Ser-890 the chain carries Phosphoserine. Basic and acidic residues-rich tracts occupy residues 940–968 and 1007–1026; these read KFKDIIHYDPTKQDHATYERKRDDKPKES and TSEKEEGTPWNEDCGKEKPE. Residue Ser-1036 is modified to Phosphoserine. Lys-1057 is covalently cross-linked (Glycyl lysine isopeptide (Lys-Gly) (interchain with G-Cter in SUMO2)). Disordered regions lie at residues 1071–1105 and 1145–1167; these read IVWQEDPRLQDSSSEEEDVTEETDHRNSSPGEASL and RTTNLRMDCRKKHKDAKRKMKPK. 4 positions are modified to phosphoserine: Ser-1082, Ser-1083, Ser-1084, and Ser-1099. Residues 1153–1167 are compositionally biased toward basic residues; it reads CRKKHKDAKRKMKPK.

Interacts with the GTP form of RRAGA, RRAGC and RRAGD. Interacts with NIP7. Interacts with DDX18; the interaction is RNA-dependent. Interacts with DDX47; the interaction is RNA-dependent. Post-translationally, phosphorylated. As to expression, expressed in various diffuse-type gastric cancers. Detected at lower levels in skeletal muscle.

It localises to the nucleus. The protein localises to the nucleolus. Functionally, plays an essential role in the survival of diffuse-type gastric cancer cells. Acts as a nucleolar anchoring protein for DDX47. May be involved in regulation of gene expression at the post-transcriptional level or in ribosome biogenesis in cancer cells. This Homo sapiens (Human) protein is Nucleolar protein 8.